Reading from the N-terminus, the 1038-residue chain is Isoleucine--tRNA ligase (1038 aa).

The short motif at 48 to 58 (PTANGKPHVGH) is the 'HIGH' region element. Positions 590-594 (KMSKS) match the 'KMSKS' region motif. Position 593 (Lys593) interacts with ATP.

This sequence belongs to the class-I aminoacyl-tRNA synthetase family. IleS type 2 subfamily. In terms of assembly, monomer. The cofactor is Zn(2+).

Its subcellular location is the cytoplasm. The enzyme catalyses tRNA(Ile) + L-isoleucine + ATP = L-isoleucyl-tRNA(Ile) + AMP + diphosphate. Its function is as follows. Catalyzes the attachment of isoleucine to tRNA(Ile). As IleRS can inadvertently accommodate and process structurally similar amino acids such as valine, to avoid such errors it has two additional distinct tRNA(Ile)-dependent editing activities. One activity is designated as 'pretransfer' editing and involves the hydrolysis of activated Val-AMP. The other activity is designated 'posttransfer' editing and involves deacylation of mischarged Val-tRNA(Ile). The sequence is that of Isoleucine--tRNA ligase from Clostridium novyi (strain NT).